The primary structure comprises 286 residues: Putative inorganic pyrophosphatase C3A12.02 (286 aa).

Arg-85 is a diphosphate binding site. Asp-122, Asp-127, and Asp-159 together coordinate Mg(2+).

This sequence belongs to the PPase family. Requires Mg(2+) as cofactor.

Its subcellular location is the cytoplasm. The enzyme catalyses diphosphate + H2O = 2 phosphate + H(+). The sequence is that of Putative inorganic pyrophosphatase C3A12.02 from Schizosaccharomyces pombe (strain 972 / ATCC 24843) (Fission yeast).